Consider the following 626-residue polypeptide: Putative L-type lectin-domain containing receptor kinase V.8 (626 aa).

The N-terminal stretch at 1–21 (MPSELKVLHIVLVLLYTLSSS) is a signal peptide. The segment at 22–212 (TYNSNGNWTL…SIGAFHYMLS (191 aa)) is legume-lectin like. Topologically, residues 22 to 245 (TYNSNGNWTL…PKKSSDRTKK (224 aa)) are extracellular. N-linked (GlcNAc...) asparagine glycans are attached at residues asparagine 28, asparagine 59, asparagine 112, and asparagine 162. The helical transmembrane segment at 246 to 266 (ILAVCLTLAVFAVFVASGICF) threads the bilayer. Over 267-626 (VFYTRHKKVK…LTNSFLSHGR (360 aa)) the chain is Cytoplasmic. Residues 303 to 562 (FKEKQLLGKG…GLLCAHHTEL (260 aa)) form the Protein kinase domain. ATP contacts are provided by residues 309 to 317 (LGKGGFGQV) and lysine 332. Aspartate 429 acts as the Proton acceptor in catalysis.

It in the C-terminal section; belongs to the protein kinase superfamily. Ser/Thr protein kinase family. This sequence in the N-terminal section; belongs to the leguminous lectin family.

The protein localises to the cell membrane. The enzyme catalyses L-seryl-[protein] + ATP = O-phospho-L-seryl-[protein] + ADP + H(+). It catalyses the reaction L-threonyl-[protein] + ATP = O-phospho-L-threonyl-[protein] + ADP + H(+). The polypeptide is Putative L-type lectin-domain containing receptor kinase V.8 (LECRK58) (Arabidopsis thaliana (Mouse-ear cress)).